We begin with the raw amino-acid sequence, 393 residues long: Pyrimidine monooxygenase RutA (393 aa).

FMN contacts are provided by residues 79–80 (IK), N145, E154, 170–171 (RY), and S220.

This sequence belongs to the NtaA/SnaA/DszA monooxygenase family. RutA subfamily.

The enzyme catalyses uracil + FMNH2 + NADH + O2 = (Z)-3-ureidoacrylate + FMN + NAD(+) + H2O + H(+). It carries out the reaction thymine + FMNH2 + NADH + O2 = (Z)-2-methylureidoacrylate + FMN + NAD(+) + H2O + H(+). Functionally, catalyzes the pyrimidine ring opening between N-3 and C-4 by an unusual flavin hydroperoxide-catalyzed mechanism, adding oxygen atoms in the process to yield ureidoacrylate peracid, that immediately reacts with FMN forming ureidoacrylate and FMN-N(5)-oxide. The FMN-N(5)-oxide reacts spontaneously with NADH to produce FMN. Requires the flavin reductase RutF to regenerate FMN in vivo. This chain is Pyrimidine monooxygenase RutA, found in Escherichia coli O139:H28 (strain E24377A / ETEC).